A 186-amino-acid chain; its full sequence is Peptidyl-tRNA hydrolase (186 aa).

Tyr16 is a binding site for tRNA. His21 (proton acceptor) is an active-site residue. Positions 66, 68, and 114 each coordinate tRNA.

This sequence belongs to the PTH family. As to quaternary structure, monomer.

The protein resides in the cytoplasm. It catalyses the reaction an N-acyl-L-alpha-aminoacyl-tRNA + H2O = an N-acyl-L-amino acid + a tRNA + H(+). In terms of biological role, hydrolyzes ribosome-free peptidyl-tRNAs (with 1 or more amino acids incorporated), which drop off the ribosome during protein synthesis, or as a result of ribosome stalling. Catalyzes the release of premature peptidyl moieties from peptidyl-tRNA molecules trapped in stalled 50S ribosomal subunits, and thus maintains levels of free tRNAs and 50S ribosomes. The polypeptide is Peptidyl-tRNA hydrolase (Ureaplasma parvum serovar 3 (strain ATCC 700970)).